A 357-amino-acid chain; its full sequence is Neutral protease 2 homolog BDCG_00922 (357 aa).

Residues 1–19 form the signal peptide; the sequence is MRSPQSILAIVAFATTAIA. Positions 20-182 are excised as a propeptide; that stretch reads GVVPSTEKRA…FASLNQFSKR (163 aa). 3 disulfide bridges follow: Cys-188–Cys-259, Cys-266–Cys-284, and Cys-297–Cys-357. Position 308 (His-308) interacts with Zn(2+). Glu-309 is an active-site residue. 2 residues coordinate Zn(2+): His-312 and Asp-323.

Belongs to the peptidase M35 family. Zn(2+) serves as cofactor.

It localises to the secreted. The catalysed reaction is Preferential cleavage of bonds with hydrophobic residues in P1'. Also 3-Asn-|-Gln-4 and 8-Gly-|-Ser-9 bonds in insulin B chain.. In terms of biological role, secreted metalloproteinase that allows assimilation of proteinaceous substrates. Shows high activities on basic nuclear substrates such as histone and protamine. This chain is Neutral protease 2 homolog BDCG_00922, found in Ajellomyces dermatitidis (strain ER-3 / ATCC MYA-2586) (Blastomyces dermatitidis).